The primary structure comprises 830 residues: FYN-binding protein 1 (830 aa).

The segment at 1-501 (MDGKTDVKSL…REKKEQELRK (501 aa)) is disordered. Lysine 13 carries the post-translational modification N6-acetyllysine. A compositionally biased stretch (polar residues) spans 15–55 (NTGSNPTEEVSTSSRPFKVAGQNSPSGIQSKKNLFDNQGNA). Serine 38 and serine 56 each carry phosphoserine. Basic and acidic residues predominate over residues 79–89 (TYEEKSEKEPK). At serine 233 the chain carries Phosphoserine. 2 stretches are compositionally biased toward basic and acidic residues: residues 248 to 259 (PAKEDPEDKDHG) and 284 to 296 (NSEEKKEERKTDI). Serine 329 is subject to Phosphoserine. Over residues 330 to 339 (QEKEGDKDSA) the composition is skewed to basic and acidic residues. Pro residues-rich tracts occupy residues 344 to 362 (KPLPPLSVLGPPPSKPSRP) and 391 to 407 (LPPPPPTQPASQPPLPA). Positions 347-447 (PPLSVLGPPP…QDGVMHSDGT (101 aa)) are interaction with SKAP1. Residues 450 to 464 (LEEEQESDGEMYEDI) are compositionally biased toward acidic residues. Serine 456 is subject to Phosphoserine. The SH2-binding signature appears at 461-464 (YEDI). Over residues 465 to 500 (ESSKERDKKREKEEKKRLELERKEQKEREKKEQELR) the composition is skewed to basic and acidic residues. Residues 465 to 502 (ESSKERDKKREKEEKKRLELERKEQKEREKKEQELRKK) are a coiled coil. Positions 479 to 486 (KKRLELER) match the Nuclear localization signal motif. The region spanning 510–571 (QVIHHAKACC…KTTAVKIDYD (62 aa)) is the SH3 1 domain. Tyrosine 570 carries the phosphotyrosine modification. Serine 572 carries the post-translational modification Phosphoserine. The SH2-binding; to LCP2 motif lies at 595–598 (YDDV). Disordered regions lie at residues 601 to 646 (QDAP…DEKT) and 660 to 739 (KDER…EKEE). A compositionally biased stretch (acidic residues) spans 621–636 (ADDDIYDGIEEEDADD). The SH2-binding; to FYN signature appears at 626–629 (YDGI). The segment covering 660-675 (KDERKKSIREKPKVSE) has biased composition (basic and acidic residues). Residues 693–703 (VGEEVYDDVDA) show a composition bias toward acidic residues. Tyrosine 698 is subject to Phosphotyrosine. A compositionally biased stretch (basic and acidic residues) spans 722 to 739 (TKAEEKDPKKLKKQEKEE). A Nuclear localization signal motif is present at residues 732 to 739 (LKKQEKEE). Residues 747-815 (KYDGEIRVLY…LRSYLVDNDG (69 aa)) enclose the SH3 2 domain.

In terms of assembly, part of a complex consisting of SKAP2, FYB1 and PTPNS1. Part of a complex consisting of SKAP2, FYB1 and LILRB3. Part of a complex consisting of SKAP1, FYB1 and CLNK. Interacts with CLNK (via its SH2 domain) and FYN; this interaction allows SKAP1 and FYB1 to recruit FYN to the complex, thus promoting the phosphorylation of CLNK by FYN. Interacts with FYN. Interacts with LCP2. Interacts with SKAP1. Interacts with SKAP2. Interacts with FASLG. Interacts with EVL. Interacts with TMEM47. Interacts with LCK. Post-translationally, T-cell receptor ligation leads to increased tyrosine phosphorylation.

The protein localises to the cytoplasm. It is found in the nucleus. It localises to the cell junction. Acts as an adapter protein of the FYN and LCP2 signaling cascades in T-cells. May play a role in linking T-cell signaling to remodeling of the actin cytoskeleton. Modulates the expression of IL2. Involved in platelet activation. Prevents the degradation of SKAP1 and SKAP2. May be involved in high affinity immunoglobulin epsilon receptor signaling in mast cells. This Rattus norvegicus (Rat) protein is FYN-binding protein 1.